Consider the following 231-residue polypeptide: Protein FMP52, mitochondrial (231 aa).

Residues 1–44 (MNGLVLGATGLCGGGFLRHAQEAPQFSKVYAILRRELPFPATDK) constitute a mitochondrion transit peptide.

It belongs to the FMP52 family.

It localises to the mitochondrion outer membrane. This chain is Protein FMP52, mitochondrial (FMP52), found in Saccharomyces cerevisiae (strain ATCC 204508 / S288c) (Baker's yeast).